The primary structure comprises 495 residues: Aspartyl/glutamyl-tRNA(Asn/Gln) amidotransferase subunit B (495 aa).

Belongs to the GatB/GatE family. GatB subfamily. As to quaternary structure, heterotrimer of A, B and C subunits.

It catalyses the reaction L-glutamyl-tRNA(Gln) + L-glutamine + ATP + H2O = L-glutaminyl-tRNA(Gln) + L-glutamate + ADP + phosphate + H(+). The enzyme catalyses L-aspartyl-tRNA(Asn) + L-glutamine + ATP + H2O = L-asparaginyl-tRNA(Asn) + L-glutamate + ADP + phosphate + 2 H(+). Allows the formation of correctly charged Asn-tRNA(Asn) or Gln-tRNA(Gln) through the transamidation of misacylated Asp-tRNA(Asn) or Glu-tRNA(Gln) in organisms which lack either or both of asparaginyl-tRNA or glutaminyl-tRNA synthetases. The reaction takes place in the presence of glutamine and ATP through an activated phospho-Asp-tRNA(Asn) or phospho-Glu-tRNA(Gln). The polypeptide is Aspartyl/glutamyl-tRNA(Asn/Gln) amidotransferase subunit B (Halobacterium salinarum (strain ATCC 700922 / JCM 11081 / NRC-1) (Halobacterium halobium)).